A 75-amino-acid chain; its full sequence is ELLEEGEDCYCHIPPNPCCDPATCKLTPGSQCAEGLCCDQCRFKKKGTICRIARGDFPDDRCTGLSDDCPRWNDL.

Residues 1 to 75 (ELLEEGEDCY…SDDCPRWNDL (75 aa)) enclose the Disintegrin domain. Cystine bridges form between C9–C24, C11–C19, C18–C41, C32–C38, C37–C62, and C50–C69. Positions 54-56 (RGD) match the Cell attachment site motif.

This sequence belongs to the venom metalloproteinase (M12B) family. P-II subfamily. P-IIa sub-subfamily. As to quaternary structure, monomer (disintegrin). Expressed by the venom gland.

It is found in the secreted. Inhibits fibrinogen interaction with platelet receptors, and inhibits aggregation induced by ADP, thrombin, collagen and platelet-activating factor. Acts by binding to the alpha-IIb/beta-3 (ITGA2B/ITGB3) on the platelet surface. The chain is Disintegrin CTF-II from Protobothrops flavoviridis (Habu).